A 239-amino-acid polypeptide reads, in one-letter code: Eukaryotic translation initiation factor 6 (239 aa).

It belongs to the eIF-6 family. Monomer. Associates with the 60S ribosomal subunit.

Its subcellular location is the cytoplasm. It is found in the nucleus. The protein localises to the nucleolus. Its function is as follows. Binds to the 60S ribosomal subunit and prevents its association with the 40S ribosomal subunit to form the 80S initiation complex in the cytoplasm. May also be involved in ribosome biogenesis. The sequence is that of Eukaryotic translation initiation factor 6 from Entamoeba dispar (strain ATCC PRA-260 / SAW760).